Reading from the N-terminus, the 1097-residue chain is RecBCD enzyme subunit RecC (1097 aa).

It belongs to the RecC family. As to quaternary structure, heterotrimer of RecB, RecC and RecD. All subunits contribute to DNA-binding.

Functionally, a helicase/nuclease that prepares dsDNA breaks (DSB) for recombinational DNA repair. Binds to DSBs and unwinds DNA via a highly rapid and processive ATP-dependent bidirectional helicase activity. Holoenzyme degrades any linearized DNA that is unable to undergo homologous recombination. In the holoenzyme this subunit recognizes the wild-type Chi sequence, and when added to isolated RecB increases its ATP-dependent helicase processivity. Unlike the case in E.coli, suppresses RecA-dependent homologous recombination, is instead required for single-strand annealing pathway repair of DSB. The protein is RecBCD enzyme subunit RecC of Mycobacterium tuberculosis (strain ATCC 25618 / H37Rv).